A 110-amino-acid chain; its full sequence is Phosphoribosyl-ATP pyrophosphatase (110 aa).

It belongs to the PRA-PH family.

Its subcellular location is the cytoplasm. The catalysed reaction is 1-(5-phospho-beta-D-ribosyl)-ATP + H2O = 1-(5-phospho-beta-D-ribosyl)-5'-AMP + diphosphate + H(+). The protein operates within amino-acid biosynthesis; L-histidine biosynthesis; L-histidine from 5-phospho-alpha-D-ribose 1-diphosphate: step 2/9. This chain is Phosphoribosyl-ATP pyrophosphatase, found in Hahella chejuensis (strain KCTC 2396).